The following is a 272-amino-acid chain: Thymidine phosphorylase (272 aa).

Belongs to the thymidine/pyrimidine-nucleoside phosphorylase family. In terms of assembly, homodimer.

It carries out the reaction thymidine + phosphate = 2-deoxy-alpha-D-ribose 1-phosphate + thymine. In terms of biological role, the enzymes which catalyze the reversible phosphorolysis of pyrimidine nucleosides are involved in the degradation of these compounds and in their utilization as carbon and energy sources, or in the rescue of pyrimidine bases for nucleotide synthesis. In Metamycoplasma hominis (Mycoplasma hominis), this protein is Thymidine phosphorylase (deoA).